Reading from the N-terminus, the 268-residue chain is Small ribosomal subunit protein uS2 (268 aa).

Residues 161-179 (IPCNNDKYSIALMLWMLAR) are laminin-binding.

It belongs to the universal ribosomal protein uS2 family. Component of the small ribosomal subunit. Mature ribosomes consist of a small (40S) and a large (60S) subunit. The 40S subunit contains about 33 different proteins and 1 molecule of RNA (18S). The 60S subunit contains about 49 different proteins and 3 molecules of RNA (28S, 5.8S and 5S). Interacts with ribosomal protein S21.

It is found in the cytoplasm. Functionally, required for the assembly and/or stability of the 40S ribosomal subunit. Required for the processing of the 20S rRNA-precursor to mature 18S rRNA in a late step of the maturation of 40S ribosomal subunits. Binds laminin. This is Small ribosomal subunit protein uS2 (egmo3) from Echinococcus granulosus (Hydatid tapeworm).